The primary structure comprises 504 residues: Maturase K (504 aa).

Belongs to the intron maturase 2 family. MatK subfamily.

The protein resides in the plastid. Its subcellular location is the chloroplast. In terms of biological role, usually encoded in the trnK tRNA gene intron. Probably assists in splicing its own and other chloroplast group II introns. The protein is Maturase K of Mentzelia laevicaulis (Blazing star).